Here is a 321-residue protein sequence, read N- to C-terminus: Ferrochelatase (321 aa).

Fe cation contacts are provided by histidine 194 and glutamate 275.

Belongs to the ferrochelatase family.

It is found in the cytoplasm. It catalyses the reaction heme b + 2 H(+) = protoporphyrin IX + Fe(2+). It functions in the pathway porphyrin-containing compound metabolism; protoheme biosynthesis; protoheme from protoporphyrin-IX: step 1/1. Catalyzes the ferrous insertion into protoporphyrin IX. This is Ferrochelatase from Wigglesworthia glossinidia brevipalpis.